We begin with the raw amino-acid sequence, 1045 residues long: MDIS1-interacting receptor like kinase 2 (1045 aa).

The N-terminal stretch at 1-43 (MNKTNPERKISLTSFKERMACKEKPRDLQVLLIISIVLSCSFA) is a signal peptide. Residues 44–709 (VSATVEEANA…SKKSHKDRNL (666 aa)) lie on the Extracellular side of the membrane. N-linked (GlcNAc...) asparagine glycosylation is found at N63, N77, N99, and N119. LRR repeat units lie at residues 92–116 (LGSI…PFSS), 117–140 (LPNL…LWGR), 141–165 (FSKL…LGDL), 166–189 (SNLD…IGRL), 191–212 (KVTE…SFGN), 213–237 (LTKL…IGNL), 238–260 (PNLR…SFGN), 262–285 (KNVT…IGNM), 286–309 (TALD…LGNI), 311–333 (TLAV…LGEM), 334–356 (ESMI…SFGK), 357–381 (LTAL…IANS), 383–405 (ELTV…ICRG), 406–429 (GKLE…LRDC), 431–452 (SLIR…AFGV), 453–476 (YPTL…NWEQ), 477–501 (SQKL…IWNM), 502–525 (TQLS…ISNI), 527–549 (RISK…IRLL), 550–573 (TNLE…LNNL), 575–597 (RLYY…LTKL), 598–620 (SQLQ…QFRS), 621–644 (LQNL…SFKD), and 646–670 (LALT…AFRN). N-linked (GlcNAc...) asparagine glycosylation is found at N179 and N212. N-linked (GlcNAc...) asparagine glycans are attached at residues N249, N263, and N284. Residue N323 is glycosylated (N-linked (GlcNAc...) asparagine). Residues N380, N393, and N410 are each glycosylated (N-linked (GlcNAc...) asparagine). 2 N-linked (GlcNAc...) asparagine glycosylation sites follow: N487 and N500. N-linked (GlcNAc...) asparagine glycosylation occurs at N580. The N-linked (GlcNAc...) asparagine glycan is linked to N633. A glycan (N-linked (GlcNAc...) asparagine) is linked at N687. A helical membrane pass occupies residues 710 to 730 (IIYILVPIIGAIIILSVCAGI). Residues 731 to 1045 (FICFRKRTKQ…TMLSISTAFS (315 aa)) lie on the Cytoplasmic side of the membrane. The residue at position 772 (T772) is a Phosphothreonine. A Protein kinase domain is found at 775 to 1045 (FDPKYLIGTG…TMLSISTAFS (271 aa)). ATP is bound by residues 781 to 789 (IGTGGHGKV) and K802. 2 positions are modified to phosphotyrosine: Y853 and Y892. D905 acts as the Proton acceptor in catalysis. A Phosphoserine modification is found at S938. Phosphotyrosine occurs at positions 946 and 953.

Belongs to the protein kinase superfamily. Ser/Thr protein kinase family. Interacts with MDIS1 and LURE1.2. Binds to SCOOP12; this interaction triggers the formation of complex between MIK2 and the BAK1/SERK3 and SERK4 coreceptors. As to expression, expressed in pollen tubes. Highly expressed in shoots, roots and leaves.

Its subcellular location is the cell membrane. The enzyme catalyses L-seryl-[protein] + ATP = O-phospho-L-seryl-[protein] + ADP + H(+). It carries out the reaction L-threonyl-[protein] + ATP = O-phospho-L-threonyl-[protein] + ADP + H(+). Functionally, acts as a receptor of SCOOP peptides from Brassicaceae plants regulating multiple processing including plant growth, development and stress responses. Perception of SCOOP peptides induces the association of MIK2 with the coreceptors BAK1/SERK3 and SERK4 and relays the signaling through the activation of receptor-like cytosolic kinases (RLCKs) BIK1 and PBL1. Also able to detect SCOOP-like proteins (SCOOPL) present in fungal Fusarium spp. and bacterial Comamonadaceae to elicit various immune responses, including growth inhibition, ROS production, calcium Ca(2+) influx, MAPK activation and MYB51 promoter activation in roots, thus being required for resistance to several root pathogens. Involved in the pollen tube perception of the female signal. Required to trigger defense responses toward generalist herbivores such as Spodoptera littoralis, probably via the activation of jasmonate and indole glucosinolate biosynthesis. The chain is MDIS1-interacting receptor like kinase 2 from Arabidopsis thaliana (Mouse-ear cress).